A 770-amino-acid chain; its full sequence is Transferrin receptor protein 1 (770 aa).

Topologically, residues 1 to 70 (MMDQARSAFS…KPKRCNGFIC (70 aa)) are cytoplasmic. The segment at 1 to 70 (MMDQARSAFS…KPKRCNGFIC (70 aa)) is mediates interaction with SH3BP4. Serine 10 and serine 19 each carry phosphoserine. At tyrosine 20 the chain carries Phosphotyrosine. The Endocytosis signal signature appears at 20–23 (YTRF). Residue threonine 21 is modified to Phosphothreonine. A Phosphoserine modification is found at serine 24. The Stop-transfer sequence signature appears at 61 to 64 (KPKR). Residues cysteine 65 and cysteine 70 are each lipidated (S-palmitoyl cysteine). The helical; Signal-anchor for type II membrane protein transmembrane segment at 71–90 (YGTIAVVLFFLIGFMIGYLG) threads the bilayer. The Extracellular portion of the chain corresponds to 91–770 (YCKRVEPKAG…GDIWDIDNEF (680 aa)). Residues 102–122 (ERPTGTEALGTERTEPSETEE) are disordered. Threonine 107 is a glycosylation site (O-linked (GalNAc...) threonine). Positions 233–323 (SKATTVTGRL…GTGDPYTPGF (91 aa)) constitute a PA domain. Asparagine 261, asparagine 327, and asparagine 384 each carry an N-linked (GlcNAc...) asparagine glycan. Residues 579–770 (TMDLYENLNQ…GDIWDIDNEF (192 aa)) form a ligand-binding region. A Cell attachment site motif is present at residues 656-658 (RGD). N-linked (GlcNAc...) asparagine glycans are attached at residues asparagine 732 and asparagine 737.

The protein belongs to the peptidase M28 family. M28B subfamily. As to quaternary structure, homodimer; disulfide-linked. Binds one transferrin molecule per subunit. Interacts with SH3BP4. Interacts with STEAP3; facilitates TFRC endocytosis in erythroid precursor cells. Post-translationally, stearoylated by ZDHHC6 which inhibits TFRC-mediated activation of the JNK pathway and promotes mitochondrial fragmentation. Stearoylation does not affect iron uptake. In terms of processing, N- and O-glycosylated, phosphorylated and palmitoylated.

Its subcellular location is the cell membrane. It localises to the melanosome. Its function is as follows. Cellular uptake of iron occurs via receptor-mediated endocytosis of ligand-occupied transferrin receptor into specialized endosomes. Endosomal acidification leads to iron release. The apotransferrin-receptor complex is then recycled to the cell surface with a return to neutral pH and the concomitant loss of affinity of apotransferrin for its receptor. Transferrin receptor is necessary for development of erythrocytes and the nervous system. Positively regulates T and B cell proliferation through iron uptake. Acts as a lipid sensor that regulates mitochondrial fusion by regulating activation of the JNK pathway. When dietary levels of stearate (C18:0) are low, promotes activation of the JNK pathway, resulting in HUWE1-mediated ubiquitination and subsequent degradation of the mitofusin MFN2 and inhibition of mitochondrial fusion. When dietary levels of stearate (C18:0) are high, TFRC stearoylation inhibits activation of the JNK pathway and thus degradation of the mitofusin MFN2. Mediates uptake of NICOL1 into fibroblasts where it may regulate extracellular matrix production. The polypeptide is Transferrin receptor protein 1 (TFRC) (Canis lupus familiaris (Dog)).